Reading from the N-terminus, the 288-residue chain is Probable pectinesterase 56 (288 aa).

The first 27 residues, 1 to 27 (MAMTSTMQLLVLSFLVIASLFLGATVA), serve as a signal peptide directing secretion. N-linked (GlcNAc...) asparagine glycans are attached at residues N55 and N95. Substrate contacts are provided by T120 and Q150. D173 serves as the catalytic Proton donor. D194 (nucleophile) is an active-site residue. N-linked (GlcNAc...) asparagine glycosylation is present at N242. Substrate-binding residues include R262 and W264.

It belongs to the pectinesterase family.

Its subcellular location is the secreted. It localises to the cell wall. The catalysed reaction is [(1-&gt;4)-alpha-D-galacturonosyl methyl ester](n) + n H2O = [(1-&gt;4)-alpha-D-galacturonosyl](n) + n methanol + n H(+). Its pathway is glycan metabolism; pectin degradation; 2-dehydro-3-deoxy-D-gluconate from pectin: step 1/5. Acts in the modification of cell walls via demethylesterification of cell wall pectin. In Arabidopsis thaliana (Mouse-ear cress), this protein is Probable pectinesterase 56 (PME56).